The sequence spans 1098 residues: Early transcription factor large subunit homolog (1098 aa).

A Helicase ATP-binding domain is found at 17–317 (KGGRAFFPCD…PNGQPLQRQQ (301 aa)). 64–71 (WQTGTGKS) is an ATP binding site. The short motif at 246-249 (DEIH) is the DEAH box element. One can recognise a Helicase C-terminal domain in the interval 489-689 (MMKDILSIIR…EGDKALRKHA (201 aa)).

Belongs to the DEAD box helicase family. DEAH subfamily.

It localises to the virion. The catalysed reaction is ATP + H2O = ADP + phosphate + H(+). Putative initation factor. The chain is Early transcription factor large subunit homolog from African swine fever virus (isolate Tick/Malawi/Lil 20-1/1983) (ASFV).